A 768-amino-acid polypeptide reads, in one-letter code: DNA replication licensing factor MCM3 homolog 2 (768 aa).

An MCM domain is found at Thr-290–Ala-497. Gly-340–Ser-347 is an ATP binding site. An Arginine finger motif is present at residues Ser-472–Asp-475. Positions Glu-661–Ala-670 are enriched in basic and acidic residues. The interval Glu-661–Asp-689 is disordered. Residues Ala-672 to Ser-682 show a composition bias toward gly residues.

Belongs to the MCM family.

The protein resides in the nucleus. It carries out the reaction ATP + H2O = ADP + phosphate + H(+). Acts as a factor that allows the DNA to undergo a single round of replication per cell cycle. Required for DNA replication and cell proliferation. May act as a component of the MCM complex which is the putative replicative helicase of the replication licensing system in eukaryotic cells. The sequence is that of DNA replication licensing factor MCM3 homolog 2 (ROA2) from Zea mays (Maize).